A 103-amino-acid chain; its full sequence is NADH-quinone oxidoreductase subunit K 1 (103 aa).

3 helical membrane-spanning segments follow: residues 6–26, 32–52, and 67–87; these read LGHF…GIFL, IIIL…LVAF, and LVLT…VVFF.

The protein belongs to the complex I subunit 4L family. In terms of assembly, NDH-1 is composed of 14 different subunits. Subunits NuoA, H, J, K, L, M, N constitute the membrane sector of the complex.

It is found in the cell inner membrane. The enzyme catalyses a quinone + NADH + 5 H(+)(in) = a quinol + NAD(+) + 4 H(+)(out). Functionally, NDH-1 shuttles electrons from NADH, via FMN and iron-sulfur (Fe-S) centers, to quinones in the respiratory chain. The immediate electron acceptor for the enzyme in this species is believed to be ubiquinone. Couples the redox reaction to proton translocation (for every two electrons transferred, four hydrogen ions are translocated across the cytoplasmic membrane), and thus conserves the redox energy in a proton gradient. The sequence is that of NADH-quinone oxidoreductase subunit K 1 from Rhodopseudomonas palustris (strain ATCC BAA-98 / CGA009).